A 113-amino-acid polypeptide reads, in one-letter code: uncharacterized protein (113 aa).

Over residues 1-19 the composition is skewed to basic and acidic residues; it reads MDKKSAHRNPEDAKAGKYE. The segment at 1–94 is disordered; that stretch reads MDKKSAHRNP…NKWRGKRKVS (94 aa). Residues 20-41 are compositionally biased toward basic residues; it reads GKHKRKKKRKQNQNQHRSRHRS. The segment covering 52 to 66 has biased composition (low complexity); the sequence is FPSSSSSSSGSQTDS. Over residues 75–92 the composition is skewed to basic residues; that stretch reads KIKKKRREKTNKWRGKRK.

This is an uncharacterized protein from Macaca fascicularis (Crab-eating macaque).